Reading from the N-terminus, the 391-residue chain is Protein kinase ORF14 (391 aa).

One can recognise a Protein kinase domain in the interval 109–391 (VPLRHTRGNI…ETLVDEFSKI (283 aa)). Residue Lys-134 participates in ATP binding. The Proton acceptor role is filled by Asp-235.

The protein belongs to the protein kinase superfamily. Ser/Thr protein kinase family.

The catalysed reaction is L-seryl-[protein] + ATP = O-phospho-L-seryl-[protein] + ADP + H(+). The enzyme catalyses L-threonyl-[protein] + ATP = O-phospho-L-threonyl-[protein] + ADP + H(+). The sequence is that of Protein kinase ORF14 (ORF14) from Ictalurid herpesvirus 1 (strain Auburn) (IcHV-1).